A 298-amino-acid polypeptide reads, in one-letter code: Lipoyl synthase (298 aa).

Positions 37, 42, 48, 63, 67, 70, and 277 each coordinate [4Fe-4S] cluster. A Radical SAM core domain is found at 49–266 (WGGGTATVML…KTLAESYGFL (218 aa)).

This sequence belongs to the radical SAM superfamily. Lipoyl synthase family. The cofactor is [4Fe-4S] cluster.

It is found in the cytoplasm. The catalysed reaction is [[Fe-S] cluster scaffold protein carrying a second [4Fe-4S](2+) cluster] + N(6)-octanoyl-L-lysyl-[protein] + 2 oxidized [2Fe-2S]-[ferredoxin] + 2 S-adenosyl-L-methionine + 4 H(+) = [[Fe-S] cluster scaffold protein] + N(6)-[(R)-dihydrolipoyl]-L-lysyl-[protein] + 4 Fe(3+) + 2 hydrogen sulfide + 2 5'-deoxyadenosine + 2 L-methionine + 2 reduced [2Fe-2S]-[ferredoxin]. It participates in protein modification; protein lipoylation via endogenous pathway; protein N(6)-(lipoyl)lysine from octanoyl-[acyl-carrier-protein]: step 2/2. Its function is as follows. Catalyzes the radical-mediated insertion of two sulfur atoms into the C-6 and C-8 positions of the octanoyl moiety bound to the lipoyl domains of lipoate-dependent enzymes, thereby converting the octanoylated domains into lipoylated derivatives. The polypeptide is Lipoyl synthase (Myxococcus xanthus (strain DK1622)).